Reading from the N-terminus, the 325-residue chain is Melanocortin receptor 5 (325 aa).

Residues 1–37 are Extracellular-facing; sequence MNSSFHLHFLDLGLNTTDGNLSGLSVQNASSLCEDMG. N-linked (GlcNAc...) asparagine glycans are attached at residues asparagine 2, asparagine 15, asparagine 20, and asparagine 28. A helical membrane pass occupies residues 38 to 61; sequence IAVEVFLALGLISLLENILVIGAI. Residues 62-73 lie on the Cytoplasmic side of the membrane; sequence VRNRNLHTPMYF. A helical membrane pass occupies residues 74-97; it reads FVGSLAVADMLVSLSNSWETITIY. At 98-114 the chain is on the extracellular side; sequence LLTNKHLVMADASVRHL. Residues 115–138 form a helical membrane-spanning segment; that stretch reads DNVFDSMICISVVASMCSLLAIAV. Over 139-155 the chain is Cytoplasmic; sequence DRYVTIFCALRYQRIMT. Residues 156-179 form a helical membrane-spanning segment; sequence GRRSGAIIGGIWAFCASCGTVFIV. The Extracellular portion of the chain corresponds to 180–186; it reads YYESTYV. A helical membrane pass occupies residues 187-211; it reads VICLIAMFLTMLLLMASLYTHMFLL. Residues 212-239 are Cytoplasmic-facing; it reads ARTHIRRIATLPGHSSVRQRTGVKGAIT. A helical membrane pass occupies residues 240–265; sequence LAMLLGVFIVCWAPFFLHLILMISCP. The Extracellular portion of the chain corresponds to 266 to 273; sequence HNLYCSCF. The helical transmembrane segment at 274–297 threads the bilayer; the sequence is MSHFNMYLILIMCNSVIDPLIYAF. At 298–325 the chain is on the cytoplasmic side; sequence RSQEMRKTFKEIVCFQSFRTPCRFPSRY. Residue cysteine 311 is the site of S-palmitoyl cysteine attachment.

The protein belongs to the G-protein coupled receptor 1 family.

The protein resides in the cell membrane. Receptor for MSH (alpha, beta and gamma) and ACTH. The activity of this receptor is mediated by G proteins which activate adenylate cyclase. This receptor is a possible mediator of the immunomodulation properties of melanocortins. The sequence is that of Melanocortin receptor 5 (MC5R) from Bos taurus (Bovine).